Reading from the N-terminus, the 374-residue chain is uncharacterized protein (374 aa).

A signal peptide spans methionine 1–alanine 21. The Fibronectin type-III domain maps to lysine 22 to serine 102.

This is an uncharacterized protein from Treponema pallidum (strain Nichols).